Here is a 763-residue protein sequence, read N- to C-terminus: Forkhead box protein M1 (763 aa).

Residues 1–53 (MKTSPRRPLILKRRRLPLPVQNAPSETSEEEPKRSPAQQESNQAEASKEVAES) are disordered. Residues 36–45 (PAQQESNQAE) show a composition bias toward polar residues. Residues Lys163, Lys201, and Lys325 each participate in a glycyl lysine isopeptide (Lys-Gly) (interchain with G-Cter in SUMO2) cross-link. The tract at residues 198–232 (RSIKQEMEEKENCHLEQRQVKVEEPSRPSASWQNS) is disordered. The span at 200–223 (IKQEMEEKENCHLEQRQVKVEEPS) shows a compositional bias: basic and acidic residues. A DNA-binding region (fork-head) is located at residues 235 to 327 (ERPPYSYMAM…LTLDQVFKPL (93 aa)). Residues 329–351 (PGSPQLPEHLESQQKRPNPELRR) are disordered. Ser331 is subject to Phosphoserine. Positions 336–351 (EHLESQQKRPNPELRR) are enriched in basic and acidic residues. Lys356 participates in a covalent cross-link: Glycyl lysine isopeptide (Lys-Gly) (interchain with G-Cter in SUMO2). The residue at position 376 (Ser376) is a Phosphoserine; by CHEK2. Residues Lys422 and Lys440 each participate in a glycyl lysine isopeptide (Lys-Gly) (interchain with G-Cter in SUMO2) cross-link. Positions 482 to 711 (PPLEEWPSPA…PGSPEPQVSG (230 aa)) are disordered. The residue at position 489 (Ser489) is a Phosphoserine; by GSK3. Positions 494-503 (FKEESSHSWE) are enriched in basic and acidic residues. A Phosphoserine modification is found at Ser522. The segment covering 583–592 (DPASQLSYSQ) has biased composition (polar residues). At Thr611 the chain carries Phosphothreonine; by CDK1. Thr620, Thr627, and Thr662 each carry phosphothreonine. Position 693 is a phosphoserine; by CDK1 (Ser693). Ser730 and Ser739 each carry phosphoserine; by PLK1.

Interacts with PINT87aa which is encoded by the circular form of the long non-coding RNA LINC-PINT; the interaction inhibits FOXM1-mediated transcription of PHB2. Phosphorylated in M (mitotic) phase. Phosphorylation by the checkpoint kinase CHEK2 in response to DNA damage increases the FOXM1 protein stability probably stimulating the transcription of genes involved in DNA repair. Phosphorylated by CDK1 in late S and G2 phases, creating docking sites for the POLO box domains of PLK1. Subsequently, PLK1 binds and phosphorylates FOXM1, leading to activation of transcriptional activity and subsequent enhanced expression of key mitotic regulators. Phosphorylated by GSK3B leading to ubiquitination and proteasomal degradation. In terms of processing, ubiquitinated in a FBXW7-dependent manner leading to proteasomal degradation. As to expression, expressed in thymus, testis, small intestine, colon followed by ovary. Appears to be expressed only in adult organs containing proliferating/cycling cells or in response to growth factors. Also expressed in epithelial cell lines derived from tumors. Not expressed in resting cells. Isoform 2 is highly expressed in testis.

It is found in the nucleus. Functionally, transcription factor regulating the expression of cell cycle genes essential for DNA replication and mitosis. Plays a role in the control of cell proliferation. Also plays a role in DNA break repair, participating in the DNA damage checkpoint response. Promotes transcription of PHB2. The sequence is that of Forkhead box protein M1 (FOXM1) from Homo sapiens (Human).